The chain runs to 320 residues: MEKNMKFPVVDLSKLNGEERDQTMALINEACENWGFFEIVNHGLPHDLMDKIEKMTKDHYKTCQEQKFNDMLKSKGLDNLETEVEDVDWESTFYVRHLPQSNLNDISDVSDEYRTAMKDFGKRLENLAEDLLDLLCENLGLEKGYLKKVFHGTKGPTFGTKVSNYPPCPKPEMIKGLRAHTDAGGIILLFQDDKVSGLQLLKDGDWIDVPPLNHSIVINLGDQLEVITNGKYKSVLHRVVTQQEGNRMSVASFYNPGSDAEISPATSLVEKDSEYPSFVFDDYMKLYAGVKFQPKEPRFAAMKNASAVTELNPTAAVETF.

A coiled-coil region spans residues D111–K143. A Fe2OG dioxygenase domain is found at P156–P256. The Fe cation site is built by H180, D182, and H237. Residue R247 participates in 2-oxoglutarate binding.

The protein belongs to the iron/ascorbate-dependent oxidoreductase family. Requires Fe(2+) as cofactor. The cofactor is Cu(2+). In terms of tissue distribution, expressed in vegetative tissues. Constitutively expressed in leaves and blades. In ethylene exposed etiolated seedlings, localized in cells at the outer side of the exaggerated hook in an ethylene-dependent manner and following an ethylene sensitive pattern. Also detected in the root tip when treated by ethylene.

The catalysed reaction is 1-aminocyclopropane-1-carboxylate + L-ascorbate + O2 = ethene + L-dehydroascorbate + hydrogen cyanide + CO2 + 2 H2O. It functions in the pathway alkene biosynthesis; ethylene biosynthesis via S-adenosyl-L-methionine; ethylene from S-adenosyl-L-methionine: step 2/2. Functionally, enzyme involved in the ethylene biosynthesis. Required to mediate the 1-aminocyclopropane-1-carboxylic acid (ACC)-mediated reversion of the ABA-induced inhibition of seed germination via endosperm rupture. May promote stem elongation by maximizing the extensibility cells, possibly by activating ethylene biosynthesis, in response to very-long-chain fatty acids (VLCFAs C20:0 to C30:0). This is 1-aminocyclopropane-1-carboxylate oxidase 2 (ACO2) from Arabidopsis thaliana (Mouse-ear cress).